Here is an 816-residue protein sequence, read N- to C-terminus: Neuroligin-4, Y-linked (816 aa).

The N-terminal stretch at 1 to 43 is a signal peptide; the sequence is MLRPQGLLWLPLLFTSVCVMLNSNVLLWITALAIKFTLIDSQA. At 44-676 the chain is on the extracellular side; that stretch reads QYPVVNTNYG…TKRDYSTELS (633 aa). N-linked (GlcNAc...) asparagine glycosylation is present at Asn-102. Disulfide bonds link Cys-110-Cys-146 and Cys-306-Cys-317. The segment at 359–364 is interaction with NRXN1; the sequence is QGEFLN. Cys-476 and Cys-510 are joined by a disulfide. The N-linked (GlcNAc...) asparagine glycan is linked to Asn-511. The interval 636-659 is disordered; it reads TKRPAITPANNPKHSKDPHKTGPE. Over residues 649–658 the composition is skewed to basic and acidic residues; it reads HSKDPHKTGP. A helical transmembrane segment spans residues 677-697; it reads VTIAVGASLLFLNILAFAALY. The Cytoplasmic segment spans residues 698 to 816; that stretch reads YKKDKRRHET…LPHGHSTTRV (119 aa). The residue at position 712 (Ser-712) is a Phosphoserine.

Belongs to the type-B carboxylesterase/lipase family. Homodimer. Interacts with NRXN1 in a calcium-dependent manner. Interaction with neurexins is mediated by heparan sulfate glycan modification on neurexin. Interacts through its C-terminus with DLG4/PSD-95 third PDZ domain. Expressed in fetal and adult brain, prostate and testis.

It localises to the cell membrane. The protein localises to the postsynaptic density membrane. In terms of biological role, cell surface protein involved in cell-cell-interactions via its interactions with neurexin family members. This is Neuroligin-4, Y-linked (NLGN4Y) from Homo sapiens (Human).